The chain runs to 45 residues: Photosystem II reaction center protein K (45 aa).

A propeptide spanning residues 1–8 (MITAIIIA) is cleaved from the precursor. The helical transmembrane segment at 23 to 43 (ILPVIPIFFLLLAFVWQAAIG) threads the bilayer.

It belongs to the PsbK family. In terms of assembly, PSII is composed of 1 copy each of membrane proteins PsbA, PsbB, PsbC, PsbD, PsbE, PsbF, PsbH, PsbI, PsbJ, PsbK, PsbL, PsbM, PsbT, PsbX, PsbY, PsbZ, Psb30/Ycf12, at least 3 peripheral proteins of the oxygen-evolving complex and a large number of cofactors. It forms dimeric complexes.

It is found in the plastid. It localises to the chloroplast thylakoid membrane. One of the components of the core complex of photosystem II (PSII). PSII is a light-driven water:plastoquinone oxidoreductase that uses light energy to abstract electrons from H(2)O, generating O(2) and a proton gradient subsequently used for ATP formation. It consists of a core antenna complex that captures photons, and an electron transfer chain that converts photonic excitation into a charge separation. This Gracilaria tenuistipitata var. liui (Red alga) protein is Photosystem II reaction center protein K.